The sequence spans 161 residues: 2-C-methyl-D-erythritol 2,4-cyclodiphosphate synthase (161 aa).

The a divalent metal cation site is built by Asp-10 and His-12. 4-CDP-2-C-methyl-D-erythritol 2-phosphate contacts are provided by residues 10-12 and 36-37; these read DVH and HS. His-44 contacts a divalent metal cation. Residues 58 to 60, 63 to 67, and Arg-144 each bind 4-CDP-2-C-methyl-D-erythritol 2-phosphate; these read DIG and FSDTD.

It belongs to the IspF family. As to quaternary structure, homotrimer. A divalent metal cation is required as a cofactor.

It carries out the reaction 4-CDP-2-C-methyl-D-erythritol 2-phosphate = 2-C-methyl-D-erythritol 2,4-cyclic diphosphate + CMP. It participates in isoprenoid biosynthesis; isopentenyl diphosphate biosynthesis via DXP pathway; isopentenyl diphosphate from 1-deoxy-D-xylulose 5-phosphate: step 4/6. Its function is as follows. Involved in the biosynthesis of isopentenyl diphosphate (IPP) and dimethylallyl diphosphate (DMAPP), two major building blocks of isoprenoid compounds. Catalyzes the conversion of 4-diphosphocytidyl-2-C-methyl-D-erythritol 2-phosphate (CDP-ME2P) to 2-C-methyl-D-erythritol 2,4-cyclodiphosphate (ME-CPP) with a corresponding release of cytidine 5-monophosphate (CMP). The chain is 2-C-methyl-D-erythritol 2,4-cyclodiphosphate synthase from Burkholderia cenocepacia (strain HI2424).